The primary structure comprises 194 residues: FMN-dependent NADH:quinone oxidoreductase (194 aa).

FMN is bound by residues serine 10 and 90-93 (MYNL).

It belongs to the azoreductase type 1 family. In terms of assembly, homodimer. FMN is required as a cofactor.

The catalysed reaction is 2 a quinone + NADH + H(+) = 2 a 1,4-benzosemiquinone + NAD(+). It catalyses the reaction N,N-dimethyl-1,4-phenylenediamine + anthranilate + 2 NAD(+) = 2-(4-dimethylaminophenyl)diazenylbenzoate + 2 NADH + 2 H(+). Its function is as follows. Quinone reductase that provides resistance to thiol-specific stress caused by electrophilic quinones. In terms of biological role, also exhibits azoreductase activity. Catalyzes the reductive cleavage of the azo bond in aromatic azo compounds to the corresponding amines. This is FMN-dependent NADH:quinone oxidoreductase from Haemophilus influenzae (strain PittEE).